A 185-amino-acid chain; its full sequence is uncharacterized protein (185 aa).

In terms of domain architecture, N-acetyltransferase spans 9–169; that stretch reads VILELAKESD…NGREDDKPLL (161 aa).

This is an uncharacterized protein from Bacillus subtilis (strain 168).